Consider the following 852-residue polypeptide: Bifunctional uridylyltransferase/uridylyl-removing enzyme (852 aa).

The segment at 1-318 (MPENLSSALE…STPVRVTLRI (318 aa)) is uridylyltransferase. The tract at residues 319–672 (DDDYIQVNNQ…SRILPQSDSF (354 aa)) is uridylyl-removing. The 123-residue stretch at 436 to 558 (VDDHILAVVR…VQTHERLSAL (123 aa)) folds into the HD domain. ACT domains lie at 673–757 (QVMV…SCNR) and 785–852 (SVEI…EQLA).

It belongs to the GlnD family. Requires Mg(2+) as cofactor.

It catalyses the reaction [protein-PII]-L-tyrosine + UTP = [protein-PII]-uridylyl-L-tyrosine + diphosphate. The enzyme catalyses [protein-PII]-uridylyl-L-tyrosine + H2O = [protein-PII]-L-tyrosine + UMP + H(+). Its activity is regulated as follows. Uridylyltransferase (UTase) activity is inhibited by glutamine, while glutamine activates uridylyl-removing (UR) activity. Its function is as follows. Modifies, by uridylylation and deuridylylation, the PII regulatory proteins (GlnB and homologs), in response to the nitrogen status of the cell that GlnD senses through the glutamine level. Under low glutamine levels, catalyzes the conversion of the PII proteins and UTP to PII-UMP and PPi, while under higher glutamine levels, GlnD hydrolyzes PII-UMP to PII and UMP (deuridylylation). Thus, controls uridylylation state and activity of the PII proteins, and plays an important role in the regulation of nitrogen assimilation and metabolism. The chain is Bifunctional uridylyltransferase/uridylyl-removing enzyme from Neisseria gonorrhoeae (strain ATCC 700825 / FA 1090).